The chain runs to 404 residues: uncharacterized protein (404 aa).

This sequence belongs to the lymphocryptovirus BTRF1 family.

This is an uncharacterized protein from Homo sapiens (Human).